The chain runs to 633 residues: Extracellular metalloproteinase mep (633 aa).

An N-terminal signal peptide occupies residues 1-18 (MRLLSLAGAMALPLCVLA). Positions 19 to 244 (HPTHRTRGIA…IHGVVDYISD (226 aa)) are excised as a propeptide. An N-linked (GlcNAc...) asparagine glycan is attached at Asn326. Position 428 (His428) interacts with Zn(2+). Glu429 is a catalytic residue. Zn(2+) is bound at residue His432. An N-linked (GlcNAc...) asparagine glycan is attached at Asn514.

Belongs to the peptidase M36 family. Requires Zn(2+) as cofactor.

The protein localises to the secreted. Its function is as follows. Secreted metalloproteinase that allows assimilation of proteinaceous substrates. This Aspergillus terreus (strain NIH 2624 / FGSC A1156) protein is Extracellular metalloproteinase mep (mep).